The chain runs to 276 residues: Sulfur carrier protein FdhD (276 aa).

Cysteine 118 functions as the Cysteine persulfide intermediate in the catalytic mechanism.

This sequence belongs to the FdhD family.

The protein localises to the cytoplasm. Required for formate dehydrogenase (FDH) activity. Acts as a sulfur carrier protein that transfers sulfur from IscS to the molybdenum cofactor prior to its insertion into FDH. The protein is Sulfur carrier protein FdhD of Mycobacterium bovis (strain ATCC BAA-935 / AF2122/97).